A 185-amino-acid chain; its full sequence is Ribosome-recycling factor (185 aa).

The disordered stretch occupies residues 143 to 163 (EKEKLISEDDNKKGMDDIQKE).

Belongs to the RRF family.

It is found in the cytoplasm. Its function is as follows. Responsible for the release of ribosomes from messenger RNA at the termination of protein biosynthesis. May increase the efficiency of translation by recycling ribosomes from one round of translation to another. This chain is Ribosome-recycling factor, found in Syntrophomonas wolfei subsp. wolfei (strain DSM 2245B / Goettingen).